The chain runs to 197 residues: RNA chaperone ProQ (197 aa).

The segment at 115–138 is disordered; sequence RAAAKKAQQKKHPRKPANKNLKKE. Residues 117–131 show a composition bias toward basic residues; that stretch reads AAKKAQQKKHPRKPA.

It belongs to the ProQ family.

It localises to the cytoplasm. Functionally, RNA chaperone with significant RNA binding, RNA strand exchange and RNA duplexing activities. This is RNA chaperone ProQ from Haemophilus influenzae (strain ATCC 51907 / DSM 11121 / KW20 / Rd).